Consider the following 225-residue polypeptide: MRAPPLLLLLAACAPPSGAAVDPTPPGWEPAPDAPWCPYKVLSEGPEAGGGRLCFRSPVRGFRCQTPGCVTLASAGGSLRAHVLRNRSVLLQWRLAPAEARRVRVFALNCSWRGTYTRFPCDRVLLGASCRDYLLPDVHDSVRYRLCLQPLPLPLRAELAAAPPELAECVEFTAEPAAMQEIVVAMTAVGGSICVMLVVICLLVAYITENLMHPTFRRPSLRRQP.

The N-terminal stretch at 1–19 is a signal peptide; sequence MRAPPLLLLLAACAPPSGA. Residues 20-181 lie on the Extracellular side of the membrane; sequence AVDPTPPGWE…FTAEPAAMQE (162 aa). The region spanning 72 to 167 is the Fibronectin type-III domain; the sequence is LASAGGSLRA…ELAAAPPELA (96 aa). 2 N-linked (GlcNAc...) asparagine glycosylation sites follow: asparagine 86 and asparagine 109. Residues 182–202 form a helical membrane-spanning segment; sequence IVVAMTAVGGSICVMLVVICL. Over 203–225 the chain is Cytoplasmic; sequence LVAYITENLMHPTFRRPSLRRQP.

The protein localises to the membrane. This chain is Fibronectin type III domain-containing protein 10 (Fndc10), found in Rattus norvegicus (Rat).